The following is a 403-amino-acid chain: Prostaglandin D2 receptor 2 (403 aa).

The Extracellular portion of the chain corresponds to 1 to 34 (MANITLKPLCPLLEEMVQLPNHSNSSLRYIDHVS). 3 N-linked (GlcNAc...) asparagine glycosylation sites follow: N3, N21, and N24. The helical transmembrane segment at 35–55 (VLLHGLASLLGLVENGLILFV) threads the bilayer. The Cytoplasmic segment spans residues 56–71 (VGCRMRQTVVTTWVLH). The helical transmembrane segment at 72 to 92 (LALSDLLAAASLPFFTYFLAV) threads the bilayer. The Extracellular portion of the chain corresponds to 93–104 (GHSWELGTTFCK). A disulfide bridge connects residues C103 and C198. A helical membrane pass occupies residues 105–125 (LHSSVFFLNMFASGFLLSAIS). At 126–147 (LDRCLQVVRPVWAQNHRTVAAA) the chain is on the cytoplasmic side. Residues 148–168 (HRVCLMLWALAVLNTVPYFVF) traverse the membrane as a helical segment. Residues 169–209 (RDTIPRRDGRIMCYYNMLLLNPGSDRDTTCDYRQKALAVSK) lie on the Extracellular side of the membrane. Residues 210–230 (FLLAFMVPLAIIASSHVAVSL) form a helical membrane-spanning segment. The Cytoplasmic portion of the chain corresponds to 231-245 (QLHHRGRQRTGRFVR). A helical transmembrane segment spans residues 246-266 (LVAAIVVAFILCWGPYHIFSL). Residues 267–284 (LEARAHSVTTLRQLASRG) lie on the Extracellular side of the membrane. Residues 285–305 (LPFVTSLAFFNSVVNPLLYVL) form a helical membrane-spanning segment. The Cytoplasmic segment spans residues 306–403 (TCPDMLHKLR…KQGSLSCTLD (98 aa)). An Involved in the recycling of CRTH2 motif is present at residues 329–332 (DSDL). A Phosphoserine modification is found at S330. Disordered stretches follow at residues 332-353 (LSTGPGKRCRRRHRRRASSTTT) and 384-403 (PRRVREQSQEKQGSLSCTLD). Positions 338–348 (KRCRRRHRRRA) are enriched in basic residues. S349 is subject to Phosphoserine. Residues 393–403 (EKQGSLSCTLD) are compositionally biased toward polar residues.

This sequence belongs to the G-protein coupled receptor 1 family. Post-translationally, phosphorylated.

It localises to the cell membrane. Its function is as follows. Receptor for prostaglandin D2 (PGD2). Coupled to the G(i)-protein. Receptor activation may result in pertussis toxin-sensitive decreases in cAMP levels and Ca(2+) mobilization. PI3K signaling is also implicated in mediating PTGDR2 effects. PGD2 induced receptor internalization. CRTH2 internalization can be regulated by diverse kinases such as, PKC, PKA, GRK2, GPRK5/GRK5 and GRK6. Receptor activation is responsible, at least in part, in immune regulation and allergic/inflammation responses. The protein is Prostaglandin D2 receptor 2 (Ptgdr2) of Rattus norvegicus (Rat).